Consider the following 596-residue polypeptide: DNA primase (596 aa).

The CHC2-type zinc finger occupies 41-65 (CPFHHEKTPSFSVSQDKQIYKCFGC). The Toprim domain occupies 255–336 (DTIIIVEGYM…DIKIIKIPDG (82 aa)). Residues glutamate 261, aspartate 305, and aspartate 307 each coordinate Mg(2+).

The protein belongs to the DnaG primase family. As to quaternary structure, monomer. Interacts with DnaB. The cofactor is Zn(2+). Mg(2+) is required as a cofactor.

The enzyme catalyses ssDNA + n NTP = ssDNA/pppN(pN)n-1 hybrid + (n-1) diphosphate.. Functionally, RNA polymerase that catalyzes the synthesis of short RNA molecules used as primers for DNA polymerase during DNA replication. The sequence is that of DNA primase from Clostridium acetobutylicum (strain ATCC 824 / DSM 792 / JCM 1419 / IAM 19013 / LMG 5710 / NBRC 13948 / NRRL B-527 / VKM B-1787 / 2291 / W).